The following is a 140-amino-acid chain: Profilin (140 aa).

Position 2 is an N-acetylserine (serine 2).

The protein belongs to the profilin family. Occurs in many kinds of cells as a complex with monomeric actin in a 1:1 ratio.

Its subcellular location is the cytoplasm. It is found in the cytoskeleton. Binds to actin and affects the structure of the cytoskeleton. At high concentrations, profilin prevents the polymerization of actin, whereas it enhances it at low concentrations. By binding to PIP2, it inhibits the formation of IP3 and DG. This Clypeaster japonicus (Sand dollar) protein is Profilin.